A 251-amino-acid polypeptide reads, in one-letter code: MSDIGDWFRSIPAITRYWFAATVAVPLVGKLGLISPAYLFLWPEAFLYRFQIWRPITATFYFPVGPGTGFLYLVNLYFLYQYSTRLETGAFDGRPADYLFMLLFNWICIVITGLAMDMQLLMIPLIMSVLYVWAQLNRDMIVSFWFGTRFKACYLPWVILGFNYIIGGSVINELIGNLVGHLYFFLMFRYPMDLGGRNFLSTPQFLYRWLPSRRGGVSGFGVPPASMRRAADQNGGGGRHNWGQGFRLGDQ.

Serine 2 bears the N-acetylserine mark. The Cytoplasmic segment spans residues 2 to 15 (SDIGDWFRSIPAIT). Residues 16–31 (RYWFAATVAVPLVGKL) traverse the membrane as a helical segment. At 32–69 (GLISPAYLFLWPEAFLYRFQIWRPITATFYFPVGPGTG) the chain is on the lumenal side. Residues 70 to 89 (FLYLVNLYFLYQYSTRLETG) traverse the membrane as a helical segment. Topologically, residues 90 to 94 (AFDGR) are cytoplasmic. The chain crosses the membrane as a helical span at residues 95–115 (PADYLFMLLFNWICIVITGLA). The Lumenal segment spans residues 116-122 (MDMQLLM). The helical transmembrane segment at 123 to 137 (IPLIMSVLYVWAQLN) threads the bilayer. Over 138 to 154 (RDMIVSFWFGTRFKACY) the chain is Cytoplasmic. The chain crosses the membrane as a helical span at residues 155–166 (LPWVILGFNYII). Residues 167 to 170 (GGSV) lie on the Lumenal side of the membrane. The helical transmembrane segment at 171–189 (INELIGNLVGHLYFFLMFR) threads the bilayer. Residues 190–251 (YPMDLGGRNF…WGQGFRLGDQ (62 aa)) lie on the Cytoplasmic side of the membrane. Position 201 is a phosphoserine (serine 201). Residue threonine 202 is modified to Phosphothreonine. Serine 226 is subject to Phosphoserine. The disordered stretch occupies residues 229–251 (RAADQNGGGGRHNWGQGFRLGDQ). Residues 241-248 (NWGQGFRL) carry the SHP-box motif.

This sequence belongs to the derlin family. In terms of assembly, homotetramer. The four subunits of the tetramer are arranged in a twofold symmetry. Forms heterooligomers with DERL2 and DERL3; binding to DERL3 is poorer than that between DERL2 and DERL3. Interacts (via SHP-box motif) with VCP. Interacts with AMFR, SELENOS, SEL1L, SELENOK and SYVN1, as well as with SEL1L-SYVN1 and VCP-SELENOS protein complexes; this interaction is weaker than that observed between DERL2 and these complexes. Interacts with NGLY1 and YOD1. Does not bind to EDEM1. Interacts with DNAJB9. Interacts with RNF103. Interacts with HM13. Interacts with XBP1 isoform 1 (via luminal/ectodomain domain); the interaction obviates the need for ectodomain shedding prior HM13/SPP-mediated XBP1 isoform 1 cleavage. Interacts with the signal recognition particle/SRP and the SRP receptor; in the process of endoplasmic reticulum stress-induced pre-emptive quality control. May interact with UBXN6. Interacts with ZFAND2B; probably through VCP. Interacts with CCDC47. Interacts with C18orf32. May interact with TRAM1. Forms a complex with SVIP and VCP/p97. (Microbial infection) Interacts with the cytomegalovirus US11 protein. In terms of tissue distribution, ubiquitous.

The protein resides in the endoplasmic reticulum membrane. Functionally, functional component of endoplasmic reticulum-associated degradation (ERAD) for misfolded lumenal proteins. Forms homotetramers which encircle a large channel traversing the endoplasmic reticulum (ER) membrane. This allows the retrotranslocation of misfolded proteins from the ER into the cytosol where they are ubiquitinated and degraded by the proteasome. The channel has a lateral gate within the membrane which provides direct access to membrane proteins with no need to reenter the ER lumen first. May mediate the interaction between VCP and the misfolded protein. Also involved in endoplasmic reticulum stress-induced pre-emptive quality control, a mechanism that selectively attenuates the translocation of newly synthesized proteins into the endoplasmic reticulum and reroutes them to the cytosol for proteasomal degradation. By controlling the steady-state expression of the IGF1R receptor, indirectly regulates the insulin-like growth factor receptor signaling pathway. Its function is as follows. (Microbial infection) In case of infection by cytomegaloviruses, it plays a central role in the export from the ER and subsequent degradation of MHC class I heavy chains via its interaction with US11 viral protein, which recognizes and associates with MHC class I heavy chains. Also participates in the degradation process of misfolded cytomegalovirus US2 protein. This chain is Derlin-1, found in Homo sapiens (Human).